The sequence spans 482 residues: tRNA sulfurtransferase (482 aa).

The region spanning A61 to S165 is the THUMP domain. Residues L183–I184, K265, G287, and Q296 each bind ATP. A disulfide bridge connects residues C344 and C456. The Rhodanese domain maps to V404–P482. C456 serves as the catalytic Cysteine persulfide intermediate.

Belongs to the ThiI family.

Its subcellular location is the cytoplasm. The catalysed reaction is [ThiI sulfur-carrier protein]-S-sulfanyl-L-cysteine + a uridine in tRNA + 2 reduced [2Fe-2S]-[ferredoxin] + ATP + H(+) = [ThiI sulfur-carrier protein]-L-cysteine + a 4-thiouridine in tRNA + 2 oxidized [2Fe-2S]-[ferredoxin] + AMP + diphosphate. It carries out the reaction [ThiS sulfur-carrier protein]-C-terminal Gly-Gly-AMP + S-sulfanyl-L-cysteinyl-[cysteine desulfurase] + AH2 = [ThiS sulfur-carrier protein]-C-terminal-Gly-aminoethanethioate + L-cysteinyl-[cysteine desulfurase] + A + AMP + 2 H(+). The protein operates within cofactor biosynthesis; thiamine diphosphate biosynthesis. Catalyzes the ATP-dependent transfer of a sulfur to tRNA to produce 4-thiouridine in position 8 of tRNAs, which functions as a near-UV photosensor. Also catalyzes the transfer of sulfur to the sulfur carrier protein ThiS, forming ThiS-thiocarboxylate. This is a step in the synthesis of thiazole, in the thiamine biosynthesis pathway. The sulfur is donated as persulfide by IscS. The polypeptide is tRNA sulfurtransferase (Vibrio campbellii (strain ATCC BAA-1116)).